The sequence spans 791 residues: MRGIRSLPCWAPGLSTKRIPPRELFADLFPNACVISARHSARNGLIRQFSGCSGSISNSCNPRPYRSAITSLLSANVCSKGVSAVQPRFLSTVRLFSTSQRSLEPKSNVKSTGGQVVRPELHQDQEHEDIEKGFELSERAAQAAQVNLSAKLAKDGAAGKKAGFKEIWRLLLIARPEAKKLALAFLFLLVSSGITMSIPFSIGKIMDTSTKATTEGGNELFGLSLPMFYGALAGILTLGAAANYGRIIILRIVGERIVARLRSKLFRQTFVQDAEFFDANRVGDLISRLSSDTIIVGKSITQNLSDGLRAAVSGAAGFGLMAYVSLKLSSILALLLPPIGLGAFFYGRAIRNLSRQIQRNLGTLTKIAEERLGNVKTSQSFAGEVLEVRRYNNQVRKIFELGKKESLISATFFSSTGFAGNMTILALLYVGGGMVQSGAITIGELTSFLMYTAYAGSSMFGLSSFYSELMKGVGAASRLFELQDRQPTISPTKGEKVASARGPIRFENVTFSYPTRPAVPIFRDLNFEIPQGTNVAIVGPSGGGKSTIASILLRFYSPTEGRVLIGGKDITHMNAKSLRRKIGIVSQEPVLFSGTIAENIAYGKPQAKRSEIVAAARKANCQFISDFPDGLDTQVGPRGAQLSGGQKQRIAIARALIKDPDILILDEATSALDAESETLVNSALTALLRGNNTTISIAHRLSTIKRSDTIIVLGPDGRVAEQGSYEELSARPDGAFTKLMEWQMSGGEVMDQLANTPANPVAQETSWDLQSDDGTEISEDTNIPSEPRTID.

Asn-147 is a glycosylation site (N-linked (GlcNAc...) asparagine). 2 consecutive transmembrane segments (helical) span residues 182–202 and 220–240; these read ALAF…PFSI and LFGL…TLGA. Residues 182 to 471 form the ABC transmembrane type-1 domain; it reads ALAFLFLLVS…LSSFYSELMK (290 aa). The N-linked (GlcNAc...) asparagine glycan is linked to Asn-303. A run of 2 helical transmembrane segments spans residues 307–324 and 326–346; these read GLRA…MAYV and LKLS…AFFY. N-linked (GlcNAc...) asparagine glycans are attached at residues Asn-352 and Asn-421. The next 2 membrane-spanning stretches (helical) occupy residues 422-442 and 445-465; these read MTIL…AITI and LTSF…LSSF. Residues 504-741 form the ABC transporter domain; sequence IRFENVTFSY…PDGAFTKLME (238 aa). Asn-508 carries N-linked (GlcNAc...) asparagine glycosylation. 539 to 546 is an ATP binding site; it reads GPSGGGKS. An N-linked (GlcNAc...) asparagine glycan is attached at Asn-692. Residues 754 to 769 show a composition bias toward polar residues; that stretch reads ANTPANPVAQETSWDL. The segment at 754–791 is disordered; the sequence is ANTPANPVAQETSWDLQSDDGTEISEDTNIPSEPRTID. The segment covering 770–779 has biased composition (acidic residues); that stretch reads QSDDGTEISE.

It belongs to the ABC transporter superfamily. ABCB family. Mitochondrial peptide exporter (TC 3.A.1.212) subfamily.

Its subcellular location is the cell membrane. Functionally, pleiotropic ABC efflux transporter that may be involved in A.fumigatus adaptation to azoles. In Aspergillus fumigatus (strain ATCC MYA-4609 / CBS 101355 / FGSC A1100 / Af293) (Neosartorya fumigata), this protein is ABC multidrug transporter mdr2.